We begin with the raw amino-acid sequence, 144 residues long: Peptide methionine sulfoxide reductase MsrB (144 aa).

The 124-residue stretch at 5-128 folds into the MsrB domain; it reads KEELRQRIGE…NSAALQFIPV (124 aa). Cys-117 functions as the Nucleophile in the catalytic mechanism.

This sequence belongs to the MsrB Met sulfoxide reductase family.

The catalysed reaction is L-methionyl-[protein] + [thioredoxin]-disulfide + H2O = L-methionyl-(R)-S-oxide-[protein] + [thioredoxin]-dithiol. The protein is Peptide methionine sulfoxide reductase MsrB of Ligilactobacillus salivarius (strain UCC118) (Lactobacillus salivarius).